Reading from the N-terminus, the 96-residue chain is Small, acid-soluble spore protein gamma-type (96 aa).

The segment covering 1–15 (MNTKNFTPQESRTNA) has biased composition (polar residues). The segment at 1-96 (MNTKNFTPQE…SEAKKRNNQQ (96 aa)) is disordered. Low complexity predominate over residues 16 to 27 (QQVRQQNQQSAQ). Positions 28-41 (GTSSGFATEFASET) are enriched in polar residues. Repeats lie at residues 28–52 (GTSS…QNQQ) and 61–87 (GATA…NQQS). Low complexity-rich tracts occupy residues 42–57 (NAQQ…AQAN) and 76–86 (NVQQVRQQNQQ).

The protein belongs to the gamma-type SASP family.

SASP are proteins degraded in the first minutes of spore germination and provide amino acids for both new protein synthesis and metabolism. These proteins may be involved in dormant spore's high resistance to UV light. This is Small, acid-soluble spore protein gamma-type from Laceyella sacchari (Thermoactinomyces thalpophilus).